Consider the following 407-residue polypeptide: Aminomethyltransferase, mitochondrial (407 aa).

The N-terminal 29 residues, 1 to 29, are a transit peptide targeting the mitochondrion; it reads MRGGLWQLGQSITRRLGQSDKKTIARRCY. Residues Glu-234, Arg-265, and Tyr-403 each coordinate substrate.

It belongs to the GcvT family. As to quaternary structure, the glycine cleavage system is composed of four proteins: P, T, L and H.

The protein resides in the mitochondrion. It catalyses the reaction N(6)-[(R)-S(8)-aminomethyldihydrolipoyl]-L-lysyl-[protein] + (6S)-5,6,7,8-tetrahydrofolate = N(6)-[(R)-dihydrolipoyl]-L-lysyl-[protein] + (6R)-5,10-methylene-5,6,7,8-tetrahydrofolate + NH4(+). Its function is as follows. The glycine cleavage system catalyzes the degradation of glycine. This Flaveria pringlei protein is Aminomethyltransferase, mitochondrial (GDCST).